A 528-amino-acid chain; its full sequence is Lysine--tRNA ligase (528 aa).

The 'HIGH' region signature appears at 36-44 (PSGTVHIGN). The 'KMSKS' region motif lies at 287–291 (KMSSS).

The protein belongs to the class-I aminoacyl-tRNA synthetase family.

It is found in the cytoplasm. The catalysed reaction is tRNA(Lys) + L-lysine + ATP = L-lysyl-tRNA(Lys) + AMP + diphosphate. The polypeptide is Lysine--tRNA ligase (lysS) (Treponema pallidum (strain Nichols)).